Here is a 214-residue protein sequence, read N- to C-terminus: Phosphatidylserine decarboxylase proenzyme (214 aa).

Serine 183 (schiff-base intermediate with substrate; via pyruvic acid) is an active-site residue. At serine 183 the chain carries Pyruvic acid (Ser); by autocatalysis.

Belongs to the phosphatidylserine decarboxylase family. PSD-A subfamily. In terms of assembly, heterodimer of a large membrane-associated beta subunit and a small pyruvoyl-containing alpha subunit. The cofactor is pyruvate. In terms of processing, is synthesized initially as an inactive proenzyme. Formation of the active enzyme involves a self-maturation process in which the active site pyruvoyl group is generated from an internal serine residue via an autocatalytic post-translational modification. Two non-identical subunits are generated from the proenzyme in this reaction, and the pyruvate is formed at the N-terminus of the alpha chain, which is derived from the carboxyl end of the proenzyme. The post-translation cleavage follows an unusual pathway, termed non-hydrolytic serinolysis, in which the side chain hydroxyl group of the serine supplies its oxygen atom to form the C-terminus of the beta chain, while the remainder of the serine residue undergoes an oxidative deamination to produce ammonia and the pyruvoyl prosthetic group on the alpha chain.

It is found in the cell membrane. The catalysed reaction is a 1,2-diacyl-sn-glycero-3-phospho-L-serine + H(+) = a 1,2-diacyl-sn-glycero-3-phosphoethanolamine + CO2. Its pathway is phospholipid metabolism; phosphatidylethanolamine biosynthesis; phosphatidylethanolamine from CDP-diacylglycerol: step 2/2. In terms of biological role, catalyzes the formation of phosphatidylethanolamine (PtdEtn) from phosphatidylserine (PtdSer). The polypeptide is Phosphatidylserine decarboxylase proenzyme (Desulfotalea psychrophila (strain LSv54 / DSM 12343)).